The primary structure comprises 76 residues: MATFDDVKDVIVDKLGVDGDKVMPEARFVEDLGADSLETVELIMGLEDKFGITISDEDAENIRTVQAAIDYIESKQ.

The 76-residue stretch at 1 to 76 folds into the Carrier domain; the sequence is MATFDDVKDV…AAIDYIESKQ (76 aa). O-(pantetheine 4'-phosphoryl)serine is present on Ser36.

This sequence belongs to the acyl carrier protein (ACP) family. 4'-phosphopantetheine is transferred from CoA to a specific serine of apo-ACP by AcpS. This modification is essential for activity because fatty acids are bound in thioester linkage to the sulfhydryl of the prosthetic group.

The protein localises to the cytoplasm. It participates in lipid metabolism; fatty acid biosynthesis. Its function is as follows. Carrier of the growing fatty acid chain in fatty acid biosynthesis. The protein is Acyl carrier protein of Deinococcus deserti (strain DSM 17065 / CIP 109153 / LMG 22923 / VCD115).